The following is a 392-amino-acid chain: Solute carrier family 35 member B1 (392 aa).

The interval 1-40 (MSLTKKIKNEKSLKQEKQTDQLKSNLRNNNNNINNKSKPK) is disordered. A compositionally biased stretch (basic and acidic residues) spans 7–20 (IKNEKSLKQEKQTD). Residues 25–35 (NLRNNNNNINN) are compositionally biased toward low complexity. The next 9 helical transmembrane spans lie at 57–77 (ELFFIFCVGGIYIFYLLYGLV), 97–117 (AFLLALQCFFNMVSAWLVSLV), 124–144 (NTPFMKYGFVSMLLVISTFLS), 155–175 (TQVLAKSCKPIPVIFMGLLLF), 179–199 (YPFLKYIVVIVISLGISLFML), 215–235 (HLFGNFILFVSLMMDGVMGPF), 247–267 (ATSMMLNTNIWNLGLFSIMAF), 285–305 (VIKLILAFCITSAIGQQFIFL), and 341–361 (LQWAAICMVFGGLILDLYISY). A Di-lysine motif motif is present at residues 389–392 (KKSL).

Belongs to the nucleotide-sugar transporter family. SLC35B subfamily.

Its subcellular location is the endoplasmic reticulum membrane. Functionally, probable sugar transporter. This is Solute carrier family 35 member B1 (slc35b1) from Dictyostelium discoideum (Social amoeba).